The primary structure comprises 906 residues: Coatomer subunit beta' (906 aa).

WD repeat units lie at residues 13–52, 55–94, 97–136, 140–180, 183–224, 227–266, 350–388, and 390–425; these read ARSD…LVKT, VCDL…RVHM, AHSD…SCSQ, GHTH…PNFT, GHEK…CVQT, GHAQ…LEST, SCEI…NKSF, and SAQE…KSFK. Lys627 carries the N6-acetyllysine modification. Residues 746–783 form a WD 9 repeat; sequence IRTGRLPEAAFLARTYLPSQVSRVVKLWRENLSKVNQK. The tract at residues 837-863 is disordered; that stretch reads EEAKGFQPSRSTAQQELDGKPASPTPV. Ser859 carries the post-translational modification Phosphoserine. A Phosphothreonine modification is found at Thr861. A coiled-coil region spans residues 866–890; the sequence is ASHTANKEEKSLLELEVDLDNLELV.

This sequence belongs to the WD repeat COPB2 family. In terms of assembly, oligomeric complex that consists of at least the alpha, beta, beta', gamma, delta, epsilon and zeta subunits. Probably interacts with PEX11A. Interacts with SCYL1. Interacts with JAGN1.

Its subcellular location is the cytoplasm. The protein resides in the cytosol. It is found in the golgi apparatus membrane. The protein localises to the cytoplasmic vesicle. It localises to the COPI-coated vesicle membrane. The coatomer is a cytosolic protein complex that binds to dilysine motifs and reversibly associates with Golgi non-clathrin-coated vesicles, which further mediate biosynthetic protein transport from the ER, via the Golgi up to the trans Golgi network. Coatomer complex is required for budding from Golgi membranes, and is essential for the retrograde Golgi-to-ER transport of dilysine-tagged proteins. In mammals, the coatomer can only be recruited by membranes associated to ADP-ribosylation factors (ARFs), which are small GTP-binding proteins; the complex also influences the Golgi structural integrity, as well as the processing, activity, and endocytic recycling of LDL receptors. In terms of biological role, this coatomer complex protein, essential for Golgi budding and vesicular trafficking, is a selective binding protein (RACK) for protein kinase C, epsilon type. It binds to Golgi membranes in a GTP-dependent manner. In Pongo abelii (Sumatran orangutan), this protein is Coatomer subunit beta' (COPB2).